The sequence spans 230 residues: 2-phytyl-1,4-naphtoquinone methyltransferase (230 aa).

The protein belongs to the class I-like SAM-binding methyltransferase superfamily. MenG/UbiE family.

The enzyme catalyses demethylphylloquinol + S-adenosyl-L-methionine = phylloquinol + S-adenosyl-L-homocysteine + H(+). The protein operates within cofactor biosynthesis; phylloquinone biosynthesis. Its function is as follows. Methyltransferase required for the conversion of 2-phytyl-1,4-beta-naphthoquinol to phylloquinol. The chain is 2-phytyl-1,4-naphtoquinone methyltransferase from Nostoc punctiforme (strain ATCC 29133 / PCC 73102).